We begin with the raw amino-acid sequence, 152 residues long: Ribosome maturation factor RimP (152 aa).

This sequence belongs to the RimP family.

It localises to the cytoplasm. In terms of biological role, required for maturation of 30S ribosomal subunits. This chain is Ribosome maturation factor RimP, found in Elusimicrobium minutum (strain Pei191).